Consider the following 783-residue polypeptide: Probable potassium transporter 2 (783 aa).

Over 1-21 (MDAEAGVGGADQLPWRQHYRN) the chain is Cytoplasmic. A helical membrane pass occupies residues 22–42 (LLLLAYQSFGVVYGDLSTSPL). At 43–61 (YVYKSTFSGRLRRYQDEQT) the chain is on the extracellular side. The helical transmembrane segment at 62-82 (VFGVLSLIFWTFTLIPLLKYV) threads the bilayer. Topologically, residues 83–152 (TIVLSADDNG…FMEKHKNART (70 aa)) are cytoplasmic. Residues 153 to 173 (VLLLIVLCGASMMIGDGILTP) traverse the membrane as a helical segment. Residues 174–189 (AISVLSSMSGLKVRAT) lie on the Extracellular side of the membrane. Residues 190–210 (GLHDRSVVLLSCIVLVGLFAL) traverse the membrane as a helical segment. Over 211-217 (QHRGTQK) the chain is Cytoplasmic. A helical membrane pass occupies residues 218 to 238 (VAFMFAPIVVIWLFCIGGIGL). At 239-268 (YNIIHWNPRIYQALSPYYIVKFFRTTGKDG) the chain is on the extracellular side. The helical transmembrane segment at 269 to 289 (WIALGGILLSMTGCEAMFADL) threads the bilayer. The Cytoplasmic segment spans residues 290-298 (GHFTSASVR). The chain crosses the membrane as a helical span at residues 299–319 (LAFITIIYPCLILQYMGQAAF). At 320–338 (LSKNILDMPTGFYDSIPGP) the chain is on the extracellular side. A helical transmembrane segment spans residues 339–359 (IFWPVFVVATLAAVVGSQAVI). Over 360-390 (SATFSIVKQCHSLGCFPRVKVVHTSRWIYGQ) the chain is Cytoplasmic. Residues 391–411 (IYIPEINWILMVLCVAVTVAF) traverse the membrane as a helical segment. Residues 412–422 (RDITLIGNAYG) lie on the Extracellular side of the membrane. Residues 423–443 (VACMTVMFVTTFLMALIMIFV) traverse the membrane as a helical segment. The Cytoplasmic segment spans residues 444 to 447 (WQKN). A helical transmembrane segment spans residues 448–468 (IIFALSFFLLFGSVEVVYLSS). The Extracellular segment spans residues 469–475 (SLMKVTQ). A helical transmembrane segment spans residues 476-496 (GGWVPLVLALIFMSVMYIWHY). The Cytoplasmic portion of the chain corresponds to 497 to 783 (GTRKKYQYDL…LIEVGMAYQV (287 aa)). The segment at 662 to 691 (DLADSMTMRSTKSESLRSLQSSYEQESPNV) is disordered. Polar residues predominate over residues 677-691 (LRSLQSSYEQESPNV).

The protein belongs to the HAK/KUP transporter (TC 2.A.72.3) family.

The protein localises to the cell membrane. It catalyses the reaction K(+)(in) = K(+)(out). It carries out the reaction Na(+)(in) = Na(+)(out). Its function is as follows. High-affinity potassium transporter. Can transport sodium under high sodium and low potassium concentrations in the extracellular environment. The polypeptide is Probable potassium transporter 2 (HAK2) (Oryza sativa subsp. japonica (Rice)).